A 429-amino-acid polypeptide reads, in one-letter code: Chaperone SurA (429 aa).

A signal peptide spans 1-18; that stretch reads MFKRIALVCALFSGVCFA. 2 PpiC domains span residues 170–271 and 281–380; these read NLTY…KLVA and ITQT…EVIA.

Its subcellular location is the periplasm. The enzyme catalyses [protein]-peptidylproline (omega=180) = [protein]-peptidylproline (omega=0). In terms of biological role, chaperone involved in the correct folding and assembly of outer membrane proteins. Recognizes specific patterns of aromatic residues and the orientation of their side chains, which are found more frequently in integral outer membrane proteins. May act in both early periplasmic and late outer membrane-associated steps of protein maturation. In Legionella pneumophila (strain Lens), this protein is Chaperone SurA.